The following is a 274-amino-acid chain: Large ribosomal subunit protein uL2 (274 aa).

Residues 221–274 form a disordered region; sequence RGTAMNPVDHPHGGGEGRNFGKHPVTPWGVQTKGKKTRSNKRTDKFIVRRRSKK.

Belongs to the universal ribosomal protein uL2 family. In terms of assembly, part of the 50S ribosomal subunit. Forms a bridge to the 30S subunit in the 70S ribosome.

Functionally, one of the primary rRNA binding proteins. Required for association of the 30S and 50S subunits to form the 70S ribosome, for tRNA binding and peptide bond formation. It has been suggested to have peptidyltransferase activity; this is somewhat controversial. Makes several contacts with the 16S rRNA in the 70S ribosome. In Yersinia enterocolitica, this protein is Large ribosomal subunit protein uL2.